The sequence spans 481 residues: Pre-mRNA-splicing factor sap114 (481 aa).

Residues 1–15 (MSSLMEFQDRNTTNN) are compositionally biased toward polar residues. The segment at 1–34 (MSSLMEFQDRNTTNNETEHQKSITDQSSSVPAGV) is disordered. SURP motif repeat units lie at residues 44 to 86 (IIDK…HPYY) and 147 to 189 (VLRL…YPYF). Disordered regions lie at residues 335–373 (PSLASPEKGGISSTTSVSPAAQASPVLSTTTQPKVQKPV) and 452–481 (GVEISQEEIERRKRAATQSAWGATPTNKRR). 2 stretches are compositionally biased toward polar residues: residues 345 to 368 (ISSTTSVSPAAQASPVLSTTTQPK) and 467 to 481 (ATQSAWGATPTNKRR).

In terms of assembly, belongs to the 40S cdc5-associated complex (or cwf complex), a spliceosome sub-complex reminiscent of a late-stage spliceosome composed of the U2, U5 and U6 snRNAs and at least brr2, cdc5, cwf2/prp3, cwf3/syf1, cwf4/syf3, cwf5/ecm2, spp42/cwf6, cwf7/spf27, cwf8, cwf9, cwf10, cwf11, cwf12, prp45/cwf13, cwf14, cwf15, cwf16, cwf17, cwf18, cwf19, cwf20, cwf21, cwf22, cwf23, cwf24, cwf25, cwf26, cyp7/cwf27, cwf28, cwf29/ist3, lea1, msl1, prp5/cwf1, prp10, prp12/sap130, prp17, prp22, sap61, sap62, sap114, sap145, slu7, smb1, smd1, smd3, smf1, smg1 and syf2.

Its subcellular location is the nucleus. Involved in pre-mRNA splicing. May be involved in endoplasmic reticulum-associated protein degradation (ERAD) and required for growth at low and high temperatures. This is Pre-mRNA-splicing factor sap114 (sap114) from Schizosaccharomyces pombe (strain 972 / ATCC 24843) (Fission yeast).